The following is a 981-amino-acid chain: Echinoderm microtubule-associated protein-like 4 (981 aa).

Met1 is subject to N-acetylmethionine. Disordered regions lie at residues 1–20 (MDGF…TSDV) and 57–205 (DHVA…PKLI). The interval 1–249 (MDGFAGSLDD…IPSDVDNYDD (249 aa)) is microtubule-binding. Ser7, Ser13, Ser16, and Ser61 each carry phosphoserine. Residues 14 to 63 (AASTSDVQDRLSALESRVQQQEDEITVLKAALADVLRRLAISEDHVASVK) adopt a coiled-coil conformation. At Thr96 the chain carries Phosphothreonine. Residues 114–134 (GTEKKKEKPQGQREKKEESHS) show a composition bias toward basic and acidic residues. Ser134 is modified (phosphoserine; by NEK7). The span at 137–155 (QSPQIRASPSPQPSSQPLQ) shows a compositional bias: low complexity. Residue Ser144 is modified to Phosphoserine; by NEK6. Position 146 is a phosphoserine; by NEK7 (Ser146). Residue Ser171 is modified to Phosphoserine. The segment covering 176-193 (SPAEKSHNSWENSDDSRN) has biased composition (basic and acidic residues). Phosphoserine is present on Ser200. Thr201 bears the Phosphothreonine mark. Residue Tyr226 is modified to Phosphotyrosine. Thr237 carries the phosphothreonine modification. WD repeat units follow at residues 259 to 297 (LKLE…LFNY), 301 to 348 (TQRH…VWDS), 356 to 396 (IIGL…VWDW), 403 to 438 (AEIK…FWTW), and 445 to 484 (RKQG…IWSK). Thr490 is subject to Phosphothreonine; by NEK6. WD repeat units follow at residues 500 to 538 (QISK…LWDH), 543 to 579 (EREI…LRGT), 582 to 621 (DGFQ…LWNS), 625 to 662 (RLEW…VLDA), 668 to 704 (VSIH…LYVV), 711 to 750 (YSRY…YWDI), 760 to 818 (RSDC…LFQY), and 825 to 864 (APSH…QWKL). Phosphothreonine; by NEK6 and NEK7 is present on Thr609. Positions 881 to 893 (LTKAPVSSTESVI) are enriched in polar residues. A disordered region spans residues 881 to 981 (LTKAPVSSTE…EDQQDPSPSS (101 aa)). Phosphoserine is present on residues Ser891 and Ser895. Thr897 and Thr899 each carry phosphothreonine. Ser903 is modified (phosphoserine). Polar residues predominate over residues 916 to 931 (ISSSPTLLENSLEQTV). Positions 937–946 (HSEEESEEGS) are enriched in acidic residues. Position 978 is a phosphoserine (Ser978). Residue Ser981 is modified to Phosphoserine; by NEK6 and NEK7.

This sequence belongs to the WD repeat EMAP family. In terms of assembly, homotrimer; self-association is mediated by the N-terminal coiled coil. Interacts (via WD repeats) with NUDC. Interacts with alpha- and beta-tubulin during mitosis. Post-translationally, phosphorylated during mitosis. Phosphorylation at Ser-144 and Ser-146 promotes its dissociation from microtubules during mitosis which is required for efficient chromosome congression.

It is found in the cytoplasm. It localises to the cytoskeleton. The protein resides in the spindle. The protein localises to the microtubule organizing center. Its subcellular location is the midbody. Functionally, essential for the formation and stability of microtubules (MTs). Required for the organization of the mitotic spindle and for the proper attachment of kinetochores to MTs. Promotes the recruitment of NUDC to the mitotic spindle for mitotic progression. The sequence is that of Echinoderm microtubule-associated protein-like 4 (EML4) from Homo sapiens (Human).